The following is a 664-amino-acid chain: Alcohol oxidase (664 aa).

8–39 (DIIVVGGGSTGCCIAGRLANLDDQNLTVALIE) provides a ligand contact to FAD. The active-site Proton acceptor is histidine 568. The Microbody targeting signal signature appears at 662–664 (ARF).

This sequence belongs to the GMC oxidoreductase family. As to quaternary structure, homooctamer. Requires FAD as cofactor.

It is found in the peroxisome matrix. It carries out the reaction a primary alcohol + O2 = an aldehyde + H2O2. The protein operates within energy metabolism; methane degradation. Catalyzes the oxidation of methanol to formaldehyde and hydrogen peroxide, the first step in the methanol utilization pathway of methylotrophic yeasts. The chain is Alcohol oxidase (MOX) from Pichia angusta (Yeast).